A 364-amino-acid chain; its full sequence is Large ribosomal subunit protein bL27m (364 aa).

A mitochondrion-targeting transit peptide spans 1–19 (MFSSSWQQVPKFVVQQVRT).

It belongs to the bacterial ribosomal protein bL27 family.

Its subcellular location is the mitochondrion. Its function is as follows. Component of the large subunit of mitochondrial ribosome. The polypeptide is Large ribosomal subunit protein bL27m (MRPL2) (Kluyveromyces lactis (strain ATCC 8585 / CBS 2359 / DSM 70799 / NBRC 1267 / NRRL Y-1140 / WM37) (Yeast)).